Here is a 221-residue protein sequence, read N- to C-terminus: N-(5'-phosphoribosyl)anthranilate isomerase (221 aa).

This sequence belongs to the TrpF family.

It catalyses the reaction N-(5-phospho-beta-D-ribosyl)anthranilate = 1-(2-carboxyphenylamino)-1-deoxy-D-ribulose 5-phosphate. Its pathway is amino-acid biosynthesis; L-tryptophan biosynthesis; L-tryptophan from chorismate: step 3/5. This Geobacillus thermodenitrificans (strain NG80-2) protein is N-(5'-phosphoribosyl)anthranilate isomerase.